The sequence spans 303 residues: N-acetyl-D-glucosamine kinase (303 aa).

ATP contacts are provided by residues Gly-4–Lys-11 and Gly-133–Phe-140. The Zn(2+) site is built by His-157, Cys-177, Cys-179, and Cys-184.

Belongs to the ROK (NagC/XylR) family. NagK subfamily.

It catalyses the reaction N-acetyl-D-glucosamine + ATP = N-acetyl-D-glucosamine 6-phosphate + ADP + H(+). It functions in the pathway cell wall biogenesis; peptidoglycan recycling. In terms of biological role, catalyzes the phosphorylation of N-acetyl-D-glucosamine (GlcNAc) derived from cell-wall degradation, yielding GlcNAc-6-P. The sequence is that of N-acetyl-D-glucosamine kinase from Escherichia coli O9:H4 (strain HS).